The primary structure comprises 447 residues: N-succinylarginine dihydrolase (447 aa).

Substrate contacts are provided by residues 21 to 30, N112, and 139 to 140; these read AGLAHGNVAS and HR. The active site involves E176. R215 is a substrate binding site. H251 is an active-site residue. Substrate contacts are provided by D253 and N364. The active-site Nucleophile is the C370.

The protein belongs to the succinylarginine dihydrolase family. As to quaternary structure, homodimer.

It carries out the reaction N(2)-succinyl-L-arginine + 2 H2O + 2 H(+) = N(2)-succinyl-L-ornithine + 2 NH4(+) + CO2. The protein operates within amino-acid degradation; L-arginine degradation via AST pathway; L-glutamate and succinate from L-arginine: step 2/5. Functionally, catalyzes the hydrolysis of N(2)-succinylarginine into N(2)-succinylornithine, ammonia and CO(2). This is N-succinylarginine dihydrolase from Chromohalobacter salexigens (strain ATCC BAA-138 / DSM 3043 / CIP 106854 / NCIMB 13768 / 1H11).